The primary structure comprises 265 residues: Protein Msed_2121 (265 aa).

This sequence belongs to the CinA family.

The sequence is that of Protein Msed_2121 from Metallosphaera sedula (strain ATCC 51363 / DSM 5348 / JCM 9185 / NBRC 15509 / TH2).